The following is a 249-amino-acid chain: Tumor necrosis factor receptor superfamily member 13B (249 aa).

Residues 1 to 128 are Extracellular-facing; the sequence is MAMAFCPKDQ…LSSDQLTLYC (128 aa). 2 TNFR-Cys repeats span residues 5–38 and 42–76; these read FCPK…TDFC and NCRK…AHFC. Disulfide bonds link cysteine 6-cysteine 19, cysteine 22-cysteine 34, cysteine 26-cysteine 38, cysteine 43-cysteine 58, cysteine 61-cysteine 72, and cysteine 65-cysteine 76. The tract at residues 86–116 is disordered; that stretch reads LQPELGRPQAGEVEVRSDNSGRHQGSEHGPG. Positions 98 to 111 are enriched in basic and acidic residues; that stretch reads VEVRSDNSGRHQGS. A helical; Signal-anchor for type III membrane protein membrane pass occupies residues 129–149; that stretch reads TLGVCLCAIFCCFLVALASFL. At 150 to 249 the chain is on the cytoplasmic side; the sequence is RRRGEPLPSQ…ASTGDARPAT (100 aa). The disordered stretch occupies residues 156-176; sequence LPSQPAGPRGSQANSPHAHRP.

In terms of assembly, binds TRAF2, TRAF5 and TRAF6. Binds the NH2-terminal domain of CAMLG with its C-terminus.

The protein localises to the membrane. Functionally, receptor for TNFSF13/APRIL and TNFSF13B/TALL1/BAFF/BLYS that binds both ligands with similar high affinity. Mediates calcineurin-dependent activation of NF-AT, as well as activation of NF-kappa-B and AP-1. Involved in the stimulation of B- and T-cell function and the regulation of humoral immunity. In Mus musculus (Mouse), this protein is Tumor necrosis factor receptor superfamily member 13B (Tnfrsf13b).